A 300-amino-acid chain; its full sequence is Lysenin-related protein 2 (300 aa).

Positions 12 to 35 (EQIEVDVVAVWKEGYVYENRGSTS) are N-terminal cap domain. A beta-hairpin domain region spans residues 36-109 (VEQKIKITKG…SKEIEHTITI (74 aa)). The tract at residues 110–158 (PPTSKFTRWQLNADVGGADIEYMYLIDEVTPIGGTLSIPQVIKSRAKIL) is N-terminal cap domain. A C-terminal receptor-binding domain region spans residues 159 to 299 (VGREIYLGET…EDKWILEVVK (141 aa)). An N-(acyl)-sphingosylphosphocholine contacts are provided by K187, S229, Y235, and Y284. C274 and C285 are joined by a disulfide.

This sequence belongs to the lysenin family. Binds to sphingomyelin as a monomer by using its C-terminal domain. Forms a nonamer when sphingomyelin/LRP-2 ratio is lower than ca 500. Oligomerization, but not binding, is influenced by the fluidity of sphingomyelin. In terms of tissue distribution, expressed by coelomocytes.

The protein localises to the secreted. The protein resides in the target cell membrane. Its function is as follows. Pore-forming toxin that specifically binds sphingomyelin in the plasma membrane of various cells. Has hemolytic activity. It also has antibacterial activities against B.megaterium. This is Lysenin-related protein 2 from Eisenia fetida (Red wiggler worm).